A 233-amino-acid chain; its full sequence is Purine nucleoside phosphorylase DeoD-type (233 aa).

Residue His4 participates in a purine D-ribonucleoside binding. Phosphate-binding positions include Gly20, Arg24, Arg43, and 87–90 (RVGT). Residues 179–181 (EME) and 203–204 (SD) contribute to the a purine D-ribonucleoside site. The Proton donor role is filled by Asp204.

The protein belongs to the PNP/UDP phosphorylase family. As to quaternary structure, homohexamer; trimer of homodimers.

It carries out the reaction a purine D-ribonucleoside + phosphate = a purine nucleobase + alpha-D-ribose 1-phosphate. The catalysed reaction is a purine 2'-deoxy-D-ribonucleoside + phosphate = a purine nucleobase + 2-deoxy-alpha-D-ribose 1-phosphate. In terms of biological role, catalyzes the reversible phosphorolytic breakdown of the N-glycosidic bond in the beta-(deoxy)ribonucleoside molecules, with the formation of the corresponding free purine bases and pentose-1-phosphate. In Clostridium novyi (strain NT), this protein is Purine nucleoside phosphorylase DeoD-type.